Reading from the N-terminus, the 168-residue chain is Scytalone dehydratase arp1 (168 aa).

Tyr-29 and Tyr-49 together coordinate substrate. Catalysis depends on residues His-84 and His-109. Residue Asn-130 coordinates substrate.

Belongs to the scytalone dehydratase family. Homotrimer. Each subunit contains an active site, located in the central part of the hydrophobic core of the monomer, which functions independently.

It localises to the endosome. It carries out the reaction scytalone = 1,3,8-trihydroxynaphthalene + H2O. It functions in the pathway pigment biosynthesis; melanin biosynthesis. With respect to regulation, fenoxanil inhibits arp1 scytalone dehydratase activity. Functionally, scytalone dehydratase; part of the gene cluster that mediates the biosynthesis of dihydroxynaphthalene (DHN)-melanin, a bluish-green pigment and a structural component of the conidial wall. The first step of the pathway is the production of the heptaketide naphtopyrone YWA1 by the polyketide synthase alb1 though condensation of acetyl-CoA with malonyl-CoA. The naphtopyrone YWA1 is then converted to the pentaketide 1,3,6,8-tetrahydroxynaphthalene (1,3,6,8-THN) by the heptaketide hydrolyase ayg1 though chain-length shortening. 1,3,6,8-THN is substrate of the hydroxynaphthalene reductase arp2 to yield scytalone. The scytalone dehydratase arp1 then reduces scytalone to 1,3,8-THN. 1,3,8-THN is also substrate of the hydroxynaphthalene reductase arp2 to yield vermelone. Vermelone is further converted by the multicopper oxidase abr1 to 1,8-DHN. Finally the laccase abr2 transforms 1,8-DHN to DHN-melanin. DHN-melanin biosynthesis appears to be initiated in endosomes where early enzymes (abl1, ayg1, arp1 and arp2) localize, with exocytosis leading to melanin deposition on the cell surface where late enzymes (abr1 and abr2) localize. DHN-melanin is an important structural component of the outer cell wall and is required for the presence of conidial surface hydrophobins. DHN-melanin also plays a crucial role in fungal virulence, including a protective role against the host's immune defenses. DHN-melanin also protects conidia against amoeba predation. This chain is Scytalone dehydratase arp1, found in Aspergillus fumigatus (strain ATCC MYA-4609 / CBS 101355 / FGSC A1100 / Af293) (Neosartorya fumigata).